A 1121-amino-acid polypeptide reads, in one-letter code: Transcription factor CSR2 (1121 aa).

Serine 23, serine 46, and serine 127 each carry phosphoserine. 4 disordered regions span residues 273 to 342 (PLHT…RSLP), 513 to 532 (HTQLVASRPRSSSISSPQKL), 579 to 600 (LKRNNSNGRSDNNGASSSGLAM), and 837 to 860 (IPQDKNHNEVNDTNGNSNTSLQTS). Polar residues predominate over residues 276-310 (TQRTSPSNTARTGNAMDTSNSDRASPASNNNTTDA). 3 stretches are compositionally biased toward low complexity: residues 318 to 329 (NNNPMNNNNSPA), 519 to 529 (SRPRSSSISSP), and 582 to 597 (NNSNGRSDNNGASSSG). Serine 327 carries the phosphoserine modification. A compositionally biased stretch (basic and acidic residues) spans 837–846 (IPQDKNHNEV). Lysine 841 participates in a covalent cross-link: Glycyl lysine isopeptide (Lys-Gly) (interchain with G-Cter in ubiquitin). Residues 847 to 860 (NDTNGNSNTSLQTS) show a composition bias toward polar residues. Position 987 is a phosphoserine (serine 987). Over residues 999-1009 (KTTAVSDSSNG) the composition is skewed to polar residues. Disordered stretches follow at residues 999 to 1022 (KTTAVSDSSNGAPIRDQQEQQARP) and 1075 to 1121 (TPRY…EISS). Positions 1084-1093 (TNTDYNYNDN) are enriched in low complexity.

It belongs to the CSR2 family. Phosphorylated by CDC28.

It localises to the cytoplasm. The protein resides in the nucleus. Functionally, transcription factor involved in the regulation of fermentation and aerobic oxidation. Acts as a repressor of CYC1, which is involved in electron flow through the mitochondria under aerobic condition. Required for pseudohyphal formation upon nitrogen starvation. May be involved in viability at stationary phase and aging. The polypeptide is Transcription factor CSR2 (CSR2) (Saccharomyces cerevisiae (strain ATCC 204508 / S288c) (Baker's yeast)).